Here is a 160-residue protein sequence, read N- to C-terminus: MTEDLKNTSPSKEESNEIEESSKATPKATRETKPKDSPSKTKLSAQALIAQFEKSQQKKKVPEVYVGDTVRVGVRISEGNKERVQPYEGVIIAKRHGGLNQTITVRRIFQGVGVERVFMVHSPQVASIKVERRGKVRRAKLFYLRDRVGKATRVKQRFDR.

2 stretches are compositionally biased toward basic and acidic residues: residues 1–15 (MTED…KEES) and 28–39 (ATRETKPKDSPS). Positions 1–44 (MTEDLKNTSPSKEESNEIEESSKATPKATRETKPKDSPSKTKLS) are disordered.

This sequence belongs to the bacterial ribosomal protein bL19 family.

In terms of biological role, this protein is located at the 30S-50S ribosomal subunit interface and may play a role in the structure and function of the aminoacyl-tRNA binding site. The chain is Large ribosomal subunit protein bL19 from Prochlorococcus marinus (strain SARG / CCMP1375 / SS120).